Here is a 475-residue protein sequence, read N- to C-terminus: Cytosolic non-specific dipeptidase (475 aa).

Ala-2 is subject to N-acetylalanine. Lys-9 carries the post-translational modification N6-acetyllysine. Ser-58 is modified (phosphoserine). Position 99 (His-99) interacts with Mn(2+). The active site involves Asp-101. A Mn(2+)-binding site is contributed by Asp-132. Glu-166 acts as the Proton acceptor in catalysis. Residues 166 to 167, Asp-195, and His-228 each bind substrate; that span reads EE. Mn(2+) is bound by residues Glu-167 and Asp-195. The residue at position 299 (Ser-299) is a Phosphoserine. Substrate contacts are provided by Thr-330, Arg-343, Ser-417, and His-445. His-445 contacts Mn(2+).

Belongs to the peptidase M20A family. In terms of assembly, homodimer. It depends on Mn(2+) as a cofactor.

Its subcellular location is the cytoplasm. It carries out the reaction Hydrolysis of dipeptides, preferentially hydrophobic dipeptides including prolyl amino acids.. It catalyses the reaction L-threonyl-L-threonine + H2O = 2 L-threonine. The enzyme catalyses L-threonyl-L-serine + H2O = L-threonine + L-serine. The catalysed reaction is L-seryl-L-threonine + H2O = L-threonine + L-serine. It carries out the reaction L-cysteinylglycine + H2O = L-cysteine + glycine. It catalyses the reaction (S)-lactate + L-phenylalanine = N-[(S)-lactoyl]-L-phenylalanine + H2O. Functionally, catalyzes the peptide bond hydrolysis in dipeptides, displaying a non-redundant activity toward threonyl dipeptides. Mediates threonyl dipeptide catabolism in a tissue-specific way. Has high dipeptidase activity toward cysteinylglycine, an intermediate metabolite in glutathione metabolism. Metabolizes N-lactoyl-amino acids, both through hydrolysis to form lactic acid and amino acids, as well as through their formation by reverse proteolysis. Plays a role in the regulation of cell cycle arrest and apoptosis. The sequence is that of Cytosolic non-specific dipeptidase (CNDP2) from Pongo abelii (Sumatran orangutan).